The sequence spans 940 residues: Valine--tRNA ligase (940 aa).

The short motif at 47–57 (PNVTGILHMGH) is the 'HIGH' region element. Residues 564-568 (KLSKS) carry the 'KMSKS' region motif. Lys-567 serves as a coordination point for ATP. Residues 872–938 (PMEHITKERN…LQSILDKLAS (67 aa)) adopt a coiled-coil conformation.

It belongs to the class-I aminoacyl-tRNA synthetase family. ValS type 1 subfamily. In terms of assembly, monomer.

Its subcellular location is the cytoplasm. It catalyses the reaction tRNA(Val) + L-valine + ATP = L-valyl-tRNA(Val) + AMP + diphosphate. Its function is as follows. Catalyzes the attachment of valine to tRNA(Val). As ValRS can inadvertently accommodate and process structurally similar amino acids such as threonine, to avoid such errors, it has a 'posttransfer' editing activity that hydrolyzes mischarged Thr-tRNA(Val) in a tRNA-dependent manner. This Chlamydia caviae (strain ATCC VR-813 / DSM 19441 / 03DC25 / GPIC) (Chlamydophila caviae) protein is Valine--tRNA ligase.